The chain runs to 347 residues: Fused nickel transport protein NikMN (347 aa).

A run of 9 helical transmembrane segments spans residues 6–26 (GYLS…FWYV), 40–60 (LPLV…NLPI), 73–93 (IAAV…ALLI), 96–116 (IFFG…MAVV), 140–160 (VIMA…LAAV), 185–205 (VAVP…EFIV), 236–256 (LWAG…AAGT), 273–293 (AAMA…GGFA), and 319–339 (VLSA…SAGL).

It belongs to the CbiM family. NikM subfamily. As to quaternary structure, forms an energy-coupling factor (ECF) transporter complex composed of an ATP-binding protein (A component, NikO), a transmembrane protein (T component, NikQ) and a fused possible substrate-capture protein (S component, NikMN) of unknown stoichimetry.

It is found in the cell inner membrane. Its function is as follows. Part of the energy-coupling factor (ECF) transporter complex NikMNQO involved in nickel import. The complex confers nickel uptake upon expression in E.coli; can also transport cobalt with a very low affinity. In Rhodobacter capsulatus (strain ATCC BAA-309 / NBRC 16581 / SB1003), this protein is Fused nickel transport protein NikMN (nikMN).